Here is a 364-residue protein sequence, read N- to C-terminus: 3'(2'),5'-bisphosphate nucleotidase 1 (364 aa).

The Proton acceptor role is filled by D54. The Mg(2+) site is built by E77, D141, I143, and D144. The active-site Proton acceptor is the T146. T146, H243, S272, K275, R289, and D302 together coordinate adenosine 3',5'-bisphosphate. Residues H243, S272, K275, R289, and D302 each contribute to the AMP site. Residue D302 participates in Mg(2+) binding.

This sequence belongs to the inositol monophosphatase superfamily. It depends on Mg(2+) as a cofactor.

It carries out the reaction 3'-phosphoadenylyl sulfate + H2O = adenosine 5'-phosphosulfate + phosphate. The catalysed reaction is adenosine 3',5'-bisphosphate + H2O = AMP + phosphate. The enzyme catalyses adenosine 2',5'-bisphosphate + H2O = AMP + phosphate. Functionally, phosphatase that converts adenosine 3'-phosphate 5'-phosphosulfate (PAPS) to adenosine 5'-phosphosulfate (APS) and 3'(2')-phosphoadenosine 5'-phosphate (PAP) to AMP. Regulates the flux of sulfur in the sulfur-activation pathway by converting PAPS to APS. Involved in salt tolerance. The sequence is that of 3'(2'),5'-bisphosphate nucleotidase 1 (HAL21) from Candida albicans (strain WO-1) (Yeast).